An 89-amino-acid chain; its full sequence is MVNPGRTARALCLLCLALLLLGQDTHSRKLLLQEKHSHGVGNGTTTTQEPSRENGGSTGSNNNGQLQFDSAKWEEFHTDYIYTQDVKNP.

Residues 1–22 form the signal peptide; that stretch reads MVNPGRTARALCLLCLALLLLG. Positions 23-79 are excised as a propeptide; that stretch reads QDTHSRKLLLQEKHSHGVGNGTTTTQEPSRENGGSTGSNNNGQLQFDSAKWEEFHTD. Residues 33-68 are disordered; it reads QEKHSHGVGNGTTTTQEPSRENGGSTGSNNNGQLQF. Residue Asn-42 is glycosylated (N-linked (GlcNAc...) asparagine). Sulfotyrosine occurs at positions 80 and 82. Positions 85–89 are excised as a propeptide; sequence DVKNP.

It belongs to the phytosulfokine family. Sulfation is important for activity and for the binding to a putative membrane receptor. Post-translationally, PSK-alpha is produced by endopeptidase digestion. PSK-beta is produced from PSK-alpha by exopeptidase digestion. In terms of tissue distribution, expressed throughout the seedling. More abundant in fragments containing shoot or root apexes where cells proliferate vigorously.

The protein localises to the secreted. Promotes plant cell differentiation, organogenesis and somatic embryogenesis as well as cell proliferation. In Oryza sativa subsp. indica (Rice), this protein is Phytosulfokines 1 (PSK1).